A 261-amino-acid polypeptide reads, in one-letter code: Chanoclavine-I dehydrogenase easD (261 aa).

An N-terminal signal peptide occupies residues 1 to 20 (MPSMTSKVFAITGGASGIGA). Isoleucine 18 provides a ligand contact to NADP(+). Asparagine 43 carries N-linked (GlcNAc...) asparagine glycosylation. NADP(+)-binding residues include aspartate 66, arginine 132, tyrosine 166, lysine 170, and threonine 201. The active-site Proton donor is tyrosine 166. Lysine 170 functions as the Lowers pKa of active site Tyr in the catalytic mechanism.

It belongs to the short-chain dehydrogenases/reductases (SDR) family. As to quaternary structure, homotetramer.

It catalyses the reaction chanoclavine-I + NAD(+) = chanoclavine-I aldehyde + NADH + H(+). The protein operates within alkaloid biosynthesis; ergot alkaloid biosynthesis. Chanoclavine-I dehydrogenase; part of the gene cluster that mediates the biosynthesis of fungal ergot alkaloid. DmaW catalyzes the first step of ergot alkaloid biosynthesis by condensing dimethylallyl diphosphate (DMAP) and tryptophan to form 4-dimethylallyl-L-tryptophan. The second step is catalyzed by the methyltransferase easF that methylates 4-dimethylallyl-L-tryptophan in the presence of S-adenosyl-L-methionine, resulting in the formation of 4-dimethylallyl-L-abrine. The catalase easC and the FAD-dependent oxidoreductase easE then transform 4-dimethylallyl-L-abrine to chanoclavine-I which is further oxidized by easD in the presence of NAD(+), resulting in the formation of chanoclavine-I aldehyde. Agroclavine dehydrogenase easG then mediates the conversion of chanoclavine-I aldehyde to agroclavine via a non-enzymatic adduct reaction: the substrate is an iminium intermediate that is formed spontaneously from chanoclavine-I aldehyde in the presence of glutathione. The presence of easA is not required to complete this reaction. Further conversion of agroclavine to paspalic acid is a two-step process involving oxidation of agroclavine to elymoclavine and of elymoclavine to paspalic acid, the second step being performed by the elymoclavine oxidase cloA. Paspalic acid is then further converted to D-lysergic acid. Ergopeptines are assembled from D-lysergic acid and three different amino acids by the D-lysergyl-peptide-synthetases composed each of a monomudular and a trimodular nonribosomal peptide synthetase subunit. LpsB and lpsC encode the monomodular subunits responsible for D-lysergic acid activation and incorporation into the ergopeptine backbone. LpsA1 and A2 subunits encode the trimodular nonribosomal peptide synthetase assembling the tripeptide portion of ergopeptines. LpsA1 is responsible for formation of the major ergopeptine, ergotamine, and lpsA2 for alpha-ergocryptine, the minor ergopeptine of the total alkaloid mixture elaborated by C.purpurea. D-lysergyl-tripeptides are assembled by the nonribosomal peptide synthetases and released as N-(D-lysergyl-aminoacyl)-lactams. Cyclolization of the D-lysergyl-tripeptides is performed by the Fe(2+)/2-ketoglutarate-dependent dioxygenase easH which introduces a hydroxyl group into N-(D-lysergyl-aminoacyl)-lactam at alpha-C of the aminoacyl residue followed by spontaneous condensation with the terminal lactam carbonyl group. The chain is Chanoclavine-I dehydrogenase easD from Claviceps purpurea (Ergot fungus).